Here is a 257-residue protein sequence, read N- to C-terminus: NAD-capped RNA hydrolase NudC (257 aa).

Positions 25 and 69 each coordinate substrate. Zn(2+) contacts are provided by cysteine 98 and cysteine 101. Glutamate 111 contributes to the substrate binding site. Zn(2+) contacts are provided by cysteine 116 and cysteine 119. Residue tyrosine 124 coordinates substrate. In terms of domain architecture, Nudix hydrolase spans 125–248; it reads PQIAPCIIVA…TVARRLIEDT (124 aa). 3 residues coordinate a divalent metal cation: alanine 158, glutamate 174, and glutamate 178. The Nudix box signature appears at 159-180; it reads GFVEVGETLEQAVAREVMEESG. Substrate is bound at residue 192 to 199; the sequence is QPWPFPQS. Residue glutamate 219 coordinates a divalent metal cation. Alanine 241 lines the substrate pocket.

The protein belongs to the Nudix hydrolase family. NudC subfamily. As to quaternary structure, homodimer. Mg(2+) serves as cofactor. Requires Mn(2+) as cofactor. Zn(2+) is required as a cofactor.

It catalyses the reaction a 5'-end NAD(+)-phospho-ribonucleoside in mRNA + H2O = a 5'-end phospho-adenosine-phospho-ribonucleoside in mRNA + beta-nicotinamide D-ribonucleotide + 2 H(+). The catalysed reaction is NAD(+) + H2O = beta-nicotinamide D-ribonucleotide + AMP + 2 H(+). The enzyme catalyses NADH + H2O = reduced beta-nicotinamide D-ribonucleotide + AMP + 2 H(+). MRNA decapping enzyme that specifically removes the nicotinamide adenine dinucleotide (NAD) cap from a subset of mRNAs by hydrolyzing the diphosphate linkage to produce nicotinamide mononucleotide (NMN) and 5' monophosphate mRNA. The NAD-cap is present at the 5'-end of some mRNAs and stabilizes RNA against 5'-processing. Has preference for mRNAs with a 5'-end purine. Catalyzes the hydrolysis of a broad range of dinucleotide pyrophosphates. The protein is NAD-capped RNA hydrolase NudC of Escherichia coli O7:K1 (strain IAI39 / ExPEC).